The following is a 370-amino-acid chain: Flagellar P-ring protein (370 aa).

Residues 1–21 (MRLFSVVLAVFTLLLPSQAFA) form the signal peptide.

It belongs to the FlgI family. As to quaternary structure, the basal body constitutes a major portion of the flagellar organelle and consists of four rings (L,P,S, and M) mounted on a central rod.

The protein resides in the periplasm. Its subcellular location is the bacterial flagellum basal body. Its function is as follows. Assembles around the rod to form the L-ring and probably protects the motor/basal body from shearing forces during rotation. This Alteromonas mediterranea (strain DSM 17117 / CIP 110805 / LMG 28347 / Deep ecotype) protein is Flagellar P-ring protein.